The chain runs to 384 residues: S-adenosylmethionine synthase (384 aa).

H15 is an ATP binding site. D17 is a binding site for Mg(2+). K(+) is bound at residue E43. The L-methionine site is built by E56 and Q99. The segment at 99-109 is flexible loop; that stretch reads QSPDINQGVDR. ATP is bound by residues 164–166, 230–231, D239, 245–246, A262, and K266; these read DAK, RF, and RK. L-methionine is bound at residue D239. K270 is an L-methionine binding site.

It belongs to the AdoMet synthase family. Homotetramer; dimer of dimers. Requires Mg(2+) as cofactor. K(+) serves as cofactor.

Its subcellular location is the cytoplasm. It carries out the reaction L-methionine + ATP + H2O = S-adenosyl-L-methionine + phosphate + diphosphate. The protein operates within amino-acid biosynthesis; S-adenosyl-L-methionine biosynthesis; S-adenosyl-L-methionine from L-methionine: step 1/1. Its function is as follows. Catalyzes the formation of S-adenosylmethionine (AdoMet) from methionine and ATP. The overall synthetic reaction is composed of two sequential steps, AdoMet formation and the subsequent tripolyphosphate hydrolysis which occurs prior to release of AdoMet from the enzyme. The sequence is that of S-adenosylmethionine synthase from Salmonella agona (strain SL483).